The primary structure comprises 352 residues: Ketoisovalerate oxidoreductase subunit VorB (352 aa).

In terms of assembly, heterotrimer of the VorA, VorB and VorC subunits.

It carries out the reaction 3-methyl-2-oxobutanoate + 2 oxidized [2Fe-2S]-[ferredoxin] + CoA = 2-methylpropanoyl-CoA + 2 reduced [2Fe-2S]-[ferredoxin] + CO2 + H(+). This is Ketoisovalerate oxidoreductase subunit VorB (vorB) from Methanothermobacter thermautotrophicus (strain ATCC 29096 / DSM 1053 / JCM 10044 / NBRC 100330 / Delta H) (Methanobacterium thermoautotrophicum).